Here is a 322-residue protein sequence, read N- to C-terminus: Homeobox protein DBX1-B (322 aa).

Positions G179–K238 form a DNA-binding region, homeobox. Disordered stretches follow at residues K238–V266 and D296–S322. Positions S312–S322 are enriched in acidic residues.

This sequence belongs to the H2.0 homeobox family.

It is found in the nucleus. This Danio rerio (Zebrafish) protein is Homeobox protein DBX1-B (dbx1b).